Consider the following 130-residue polypeptide: Large ribosomal subunit protein bL12 (130 aa).

The interval 94–114 (MTEGLPKTVKEKTSKSDAEDT) is disordered.

Belongs to the bacterial ribosomal protein bL12 family. Homodimer. Part of the ribosomal stalk of the 50S ribosomal subunit. Forms a multimeric L10(L12)X complex, where L10 forms an elongated spine to which 2 to 4 L12 dimers bind in a sequential fashion. Binds GTP-bound translation factors.

Its function is as follows. Forms part of the ribosomal stalk which helps the ribosome interact with GTP-bound translation factors. Is thus essential for accurate translation. This chain is Large ribosomal subunit protein bL12, found in Chlamydia caviae (strain ATCC VR-813 / DSM 19441 / 03DC25 / GPIC) (Chlamydophila caviae).